The sequence spans 288 residues: Shikimate dehydrogenase (NADP(+)) (288 aa).

Shikimate-binding positions include 21–23 (SLS) and T68. K72 (proton acceptor) is an active-site residue. N93 and D108 together coordinate shikimate. Residues 132 to 136 (GNGGA) and L230 each bind NADP(+). Y232 is a shikimate binding site. Position 253 (G253) interacts with NADP(+).

It belongs to the shikimate dehydrogenase family. Homodimer.

It carries out the reaction shikimate + NADP(+) = 3-dehydroshikimate + NADPH + H(+). The protein operates within metabolic intermediate biosynthesis; chorismate biosynthesis; chorismate from D-erythrose 4-phosphate and phosphoenolpyruvate: step 4/7. Functionally, involved in the biosynthesis of the chorismate, which leads to the biosynthesis of aromatic amino acids. Catalyzes the reversible NADPH linked reduction of 3-dehydroshikimate (DHSA) to yield shikimate (SA). The sequence is that of Shikimate dehydrogenase (NADP(+)) from Crocosphaera subtropica (strain ATCC 51142 / BH68) (Cyanothece sp. (strain ATCC 51142)).